Here is a 213-residue protein sequence, read N- to C-terminus: Phosphoribosylformylglycinamidine synthase subunit PurQ (213 aa).

In terms of domain architecture, Glutamine amidotransferase type-1 spans 5 to 213 (ACVVVYPGSN…FQSILNYLKR (209 aa)). Residue C86 is the Nucleophile of the active site. Active-site residues include H186 and E188.

Part of the FGAM synthase complex composed of 1 PurL, 1 PurQ and 2 PurS subunits.

It is found in the cytoplasm. The catalysed reaction is N(2)-formyl-N(1)-(5-phospho-beta-D-ribosyl)glycinamide + L-glutamine + ATP + H2O = 2-formamido-N(1)-(5-O-phospho-beta-D-ribosyl)acetamidine + L-glutamate + ADP + phosphate + H(+). It carries out the reaction L-glutamine + H2O = L-glutamate + NH4(+). Its pathway is purine metabolism; IMP biosynthesis via de novo pathway; 5-amino-1-(5-phospho-D-ribosyl)imidazole from N(2)-formyl-N(1)-(5-phospho-D-ribosyl)glycinamide: step 1/2. Functionally, part of the phosphoribosylformylglycinamidine synthase complex involved in the purines biosynthetic pathway. Catalyzes the ATP-dependent conversion of formylglycinamide ribonucleotide (FGAR) and glutamine to yield formylglycinamidine ribonucleotide (FGAM) and glutamate. The FGAM synthase complex is composed of three subunits. PurQ produces an ammonia molecule by converting glutamine to glutamate. PurL transfers the ammonia molecule to FGAR to form FGAM in an ATP-dependent manner. PurS interacts with PurQ and PurL and is thought to assist in the transfer of the ammonia molecule from PurQ to PurL. In Thermotoga maritima (strain ATCC 43589 / DSM 3109 / JCM 10099 / NBRC 100826 / MSB8), this protein is Phosphoribosylformylglycinamidine synthase subunit PurQ.